A 329-amino-acid chain; its full sequence is Adenylate isopentenyltransferase 7, mitochondrial (329 aa).

Residues 1–40 (MKFSISSLKQVQPILCFKNKLSKVNVNSFLHPKEKVIFVM) constitute a mitochondrion transit peptide. Position 41–48 (41–48 (GATGSGKS)) interacts with ATP.

It belongs to the IPP transferase family. In terms of tissue distribution, expressed in both the vascular stele and the phloem companion cells of the root, in endodermis of the root elongation zone, trichomes on young leaves, and some pollen tubes.

It localises to the mitochondrion. The enzyme catalyses dimethylallyl diphosphate + ADP = N(6)-(dimethylallyl)adenosine 5'-diphosphate + diphosphate. The catalysed reaction is dimethylallyl diphosphate + ATP = N(6)-(dimethylallyl)adenosine 5'-triphosphate + diphosphate. In terms of biological role, involved in cytokinin biosynthesis. Catalyzes the transfer of an isopentenyl group from dimethylallyl diphosphate (DMAPP) to ATP and ADP. This Arabidopsis thaliana (Mouse-ear cress) protein is Adenylate isopentenyltransferase 7, mitochondrial (IPT7).